A 1063-amino-acid polypeptide reads, in one-letter code: Presequence protease, mitochondrial (1063 aa).

The transit peptide at 1–33 (MLRLANRVSRKDSGNLGIAQLKKRLLATSGVSQ) directs the protein to the mitochondrion. Residue His105 coordinates Zn(2+). Glu108 acts as the Proton acceptor in catalysis. His109 is a binding site for Zn(2+). Residue Glu181 is part of the active site. Residue Glu206 coordinates Zn(2+).

It belongs to the peptidase M16 family. PreP subfamily. Monomer and homodimer; homodimerization is induced by binding of the substrate. Zn(2+) serves as cofactor.

The protein localises to the mitochondrion intermembrane space. The protein resides in the mitochondrion matrix. In terms of biological role, degrades mitochondrial transit peptides after their cleavage in the intermembrane space or in the matrix, and presequence peptides; clearance of these peptides is required to keep the presequence processing machinery running. Preferentially cleaves the N-terminal side of paired basic amino acid residues. Also degrades other unstructured peptides. May function as an ATP-dependent peptidase as opposed to a metalloendopeptidase. The polypeptide is Presequence protease, mitochondrial (CYM1) (Debaryomyces hansenii (strain ATCC 36239 / CBS 767 / BCRC 21394 / JCM 1990 / NBRC 0083 / IGC 2968) (Yeast)).